A 90-amino-acid chain; its full sequence is Probable Fe(2+)-trafficking protein (90 aa).

Belongs to the Fe(2+)-trafficking protein family.

Functionally, could be a mediator in iron transactions between iron acquisition and iron-requiring processes, such as synthesis and/or repair of Fe-S clusters in biosynthetic enzymes. This Nitrosococcus oceani (strain ATCC 19707 / BCRC 17464 / JCM 30415 / NCIMB 11848 / C-107) protein is Probable Fe(2+)-trafficking protein.